Consider the following 106-residue polypeptide: Pyrimidine/purine nucleoside phosphorylase (106 aa).

This sequence belongs to the nucleoside phosphorylase PpnP family.

The enzyme catalyses a purine D-ribonucleoside + phosphate = a purine nucleobase + alpha-D-ribose 1-phosphate. It carries out the reaction adenosine + phosphate = alpha-D-ribose 1-phosphate + adenine. It catalyses the reaction cytidine + phosphate = cytosine + alpha-D-ribose 1-phosphate. The catalysed reaction is guanosine + phosphate = alpha-D-ribose 1-phosphate + guanine. The enzyme catalyses inosine + phosphate = alpha-D-ribose 1-phosphate + hypoxanthine. It carries out the reaction thymidine + phosphate = 2-deoxy-alpha-D-ribose 1-phosphate + thymine. It catalyses the reaction uridine + phosphate = alpha-D-ribose 1-phosphate + uracil. The catalysed reaction is xanthosine + phosphate = alpha-D-ribose 1-phosphate + xanthine. Catalyzes the phosphorolysis of diverse nucleosides, yielding D-ribose 1-phosphate and the respective free bases. Can use uridine, adenosine, guanosine, cytidine, thymidine, inosine and xanthosine as substrates. Also catalyzes the reverse reactions. In Burkholderia ambifaria (strain MC40-6), this protein is Pyrimidine/purine nucleoside phosphorylase.